An 861-amino-acid polypeptide reads, in one-letter code: Interleukin-12 receptor subunit beta-2 (861 aa).

A signal peptide spans 1–23; that stretch reads MARTVCGCSWALIFIIMSLLVKA. The Extracellular portion of the chain corresponds to 24–622; sequence KIDVCKRGDV…REFCLQGKAN (599 aa). 4 N-linked (GlcNAc...) asparagine glycosylation sites follow: Asn-48, Asn-129, Asn-166, and Asn-271. 5 Fibronectin type-III domains span residues 126–224, 226–317, 318–415, 423–520, and 521–620; these read QPQN…VVRP, PPWD…TQTP, EKEP…NIAD, APQQ…KHKA, and PLSG…LQGK. The WSXWS motif signature appears at 305-309; it reads WSDWS. N-linked (GlcNAc...) asparagine glycosylation is found at Asn-347, Asn-376, and Asn-480. The helical transmembrane segment at 623–643 threads the bilayer; the sequence is WSTFVAPSICIAVITVGVFSM. At 644–861 the chain is on the cytoplasmic side; that stretch reads RCFRQKVFVL…LKMGCGSLML (218 aa). The short motif at 662–670 is the Box 1 motif element; the sequence is CSREIPDPA. Residues 718 to 761 are disordered; the sequence is FRRPHHPNWPGKGQRLQGRHASEEDTGSSASSPPPPRALTAETG. Tyr-800 carries the post-translational modification Phosphotyrosine.

Belongs to the type I cytokine receptor family. Type 2 subfamily. As to quaternary structure, heterodimer/heterooligomer; disulfide-linked. The functional high affinity IL12 receptor is composed of I12RB1 and IL12RB2. Il12RB2 binds JAK2 (via its N-terminal) through a membrane-proximal region of the cytoplasmic domain. On IL12 stimulation, phosphorylated on C-terminal tyrosine residues.

The protein localises to the membrane. In terms of biological role, receptor for interleukin-12. This subunit is the signaling component coupling to the JAK2/STAT4 pathway. This is Interleukin-12 receptor subunit beta-2 (IL12RB2) from Sus scrofa (Pig).